Here is a 416-residue protein sequence, read N- to C-terminus: UDP-N-acetylmuramoylalanine--D-glutamate ligase (416 aa).

108–114 (GTTGKTT) is an ATP binding site.

This sequence belongs to the MurCDEF family.

Its subcellular location is the cytoplasm. The catalysed reaction is UDP-N-acetyl-alpha-D-muramoyl-L-alanine + D-glutamate + ATP = UDP-N-acetyl-alpha-D-muramoyl-L-alanyl-D-glutamate + ADP + phosphate + H(+). It participates in cell wall biogenesis; peptidoglycan biosynthesis. Cell wall formation. Catalyzes the addition of glutamate to the nucleotide precursor UDP-N-acetylmuramoyl-L-alanine (UMA). In Chlamydia trachomatis serovar A (strain ATCC VR-571B / DSM 19440 / HAR-13), this protein is UDP-N-acetylmuramoylalanine--D-glutamate ligase.